Consider the following 196-residue polypeptide: Small ribosomal subunit protein uS4c (196 aa).

Residues 17–36 are disordered; sequence ALPGLTRKTPKSGSNLKKKF. The region spanning 89 to 157 is the S4 RNA-binding domain; it reads MRLDNILFRL…VQNYIASSDP (69 aa).

It belongs to the universal ribosomal protein uS4 family. In terms of assembly, part of the 30S ribosomal subunit. Contacts protein S5. The interaction surface between S4 and S5 is involved in control of translational fidelity.

It localises to the plastid. Its subcellular location is the chloroplast. Functionally, one of the primary rRNA binding proteins, it binds directly to 16S rRNA where it nucleates assembly of the body of the 30S subunit. In terms of biological role, with S5 and S12 plays an important role in translational accuracy. The protein is Small ribosomal subunit protein uS4c (rps4) of Calamagrostis epigeios (Wood small-reed grass).